The following is a 65-amino-acid chain: Large ribosomal subunit protein bL32 (65 aa).

It belongs to the bacterial ribosomal protein bL32 family.

The polypeptide is Large ribosomal subunit protein bL32 (rpmF) (Rickettsia prowazekii (strain Madrid E)).